The primary structure comprises 327 residues: Phenylalanine--tRNA ligase alpha subunit (327 aa).

Residue Glu252 participates in Mg(2+) binding.

Belongs to the class-II aminoacyl-tRNA synthetase family. Phe-tRNA synthetase alpha subunit type 1 subfamily. Tetramer of two alpha and two beta subunits. The cofactor is Mg(2+).

Its subcellular location is the cytoplasm. The catalysed reaction is tRNA(Phe) + L-phenylalanine + ATP = L-phenylalanyl-tRNA(Phe) + AMP + diphosphate + H(+). The protein is Phenylalanine--tRNA ligase alpha subunit of Proteus mirabilis (strain HI4320).